The following is a 265-amino-acid chain: Endochitinase At2g43580 (265 aa).

An N-terminal signal peptide occupies residues 1-24; that stretch reads MALTKIFLILLLSLLGLYSETVKS. Positions 25–59 constitute a Chitin-binding type-1 domain; that stretch reads QNCDCAPNLCCSQFGYCGTTADYCGSTCQSGPCRV. 4 cysteine pairs are disulfide-bonded: cysteine 27-cysteine 35, cysteine 29-cysteine 41, cysteine 34-cysteine 48, and cysteine 52-cysteine 57. The catalytic stretch occupies residues 67-265; sequence GLVGNIVTQI…GLDPGANITC (199 aa). An N-linked (GlcNAc...) asparagine glycan is attached at asparagine 102. The active-site Proton donor is glutamate 129. Asparagine 262 carries N-linked (GlcNAc...) asparagine glycosylation.

Belongs to the glycosyl hydrolase 19 family. Chitinase class I subfamily.

The catalysed reaction is Random endo-hydrolysis of N-acetyl-beta-D-glucosaminide (1-&gt;4)-beta-linkages in chitin and chitodextrins.. This is Endochitinase At2g43580 from Arabidopsis thaliana (Mouse-ear cress).